Reading from the N-terminus, the 868-residue chain is Translation initiation factor IF-2 (868 aa).

Residues 103 to 183 show a composition bias toward basic and acidic residues; the sequence is RSELPETSDR…RQAAAERETV (81 aa). The tract at residues 103–274 is disordered; that stretch reads RSELPETSDR…GRPMLMPEQK (172 aa). The segment covering 190-207 has biased composition (pro residues); sequence VAAPPIPRPAPEPRPPAR. Basic and acidic residues predominate over residues 213–254; it reads PKAEAPRAHPAERETEARGDKRSAGLSRKDEYRELQGDDFRK. The span at 255–264 shows a compositional bias: basic residues; that stretch reads GGGKRKKPKT. One can recognise a tr-type G domain in the interval 369–538; sequence PRPPVVTIMG…LVQAEVLELK (170 aa). The tract at residues 378-385 is G1; the sequence is GHVDHGKT. Residue 378 to 385 coordinates GTP; that stretch reads GHVDHGKT. Residues 403–407 are G2; sequence GITQH. The tract at residues 424–427 is G3; the sequence is DTPG. Residues 424–428 and 478–481 each bind GTP; these read DTPGH and NKMD. Positions 478–481 are G4; sequence NKMD. A G5 region spans residues 514 to 516; it reads SAK.

Belongs to the TRAFAC class translation factor GTPase superfamily. Classic translation factor GTPase family. IF-2 subfamily.

It is found in the cytoplasm. Its function is as follows. One of the essential components for the initiation of protein synthesis. Protects formylmethionyl-tRNA from spontaneous hydrolysis and promotes its binding to the 30S ribosomal subunits. Also involved in the hydrolysis of GTP during the formation of the 70S ribosomal complex. The polypeptide is Translation initiation factor IF-2 (Methylococcus capsulatus (strain ATCC 33009 / NCIMB 11132 / Bath)).